A 331-amino-acid polypeptide reads, in one-letter code: Aspartate carbamoyltransferase catalytic subunit (331 aa).

Residues Arg-76 and Thr-77 each coordinate carbamoyl phosphate. Residue Lys-104 coordinates L-aspartate. Arg-126, His-154, and Gln-157 together coordinate carbamoyl phosphate. Positions 187 and 246 each coordinate L-aspartate. 2 residues coordinate carbamoyl phosphate: Gly-287 and Pro-288.

It belongs to the aspartate/ornithine carbamoyltransferase superfamily. ATCase family. In terms of assembly, heterododecamer (2C3:3R2) of six catalytic PyrB chains organized as two trimers (C3), and six regulatory PyrI chains organized as three dimers (R2).

The catalysed reaction is carbamoyl phosphate + L-aspartate = N-carbamoyl-L-aspartate + phosphate + H(+). The protein operates within pyrimidine metabolism; UMP biosynthesis via de novo pathway; (S)-dihydroorotate from bicarbonate: step 2/3. Its function is as follows. Catalyzes the condensation of carbamoyl phosphate and aspartate to form carbamoyl aspartate and inorganic phosphate, the committed step in the de novo pyrimidine nucleotide biosynthesis pathway. This is Aspartate carbamoyltransferase catalytic subunit from Dehalococcoides mccartyi (strain ATCC BAA-2100 / JCM 16839 / KCTC 5957 / BAV1).